The chain runs to 237 residues: Insulin-like growth factor-binding protein 4 (237 aa).

The IGFBP N-terminal domain maps to 2–82 (EAIHCPPCSE…VHGQGVCMEL (81 aa)). Disulfide bonds link Cys6-Cys32, Cys9-Cys34, Cys17-Cys35, Cys23-Cys38, Cys46-Cys59, and Cys53-Cys79. Asn104 is a glycosylation site (N-linked (GlcNAc...) asparagine). Intrachain disulfides connect Cys110–Cys117, Cys153–Cys183, Cys194–Cys205, and Cys207–Cys228. Residues 150–228 (QGSCQSELHR…GLEPKGELDC (79 aa)) form the Thyroglobulin type-1 domain. Ser234 is modified (phosphoserine).

As to quaternary structure, binds IGF2 more than IGF1. There are two different molecular mass variants (29 kDa and 24 kDa forms). The 29 kDa form was shown to be N-glycosylated. As to expression, detected in adult ewe, liver &gt; kidney &gt; lung &gt;&gt; heart and also in several fetal tissues.

The protein resides in the secreted. IGF-binding proteins prolong the half-life of the IGFs and have been shown to either inhibit or stimulate the growth promoting effects of the IGFs on cell culture. They alter the interaction of IGFs with their cell surface receptors. The chain is Insulin-like growth factor-binding protein 4 (IGFBP4) from Ovis aries (Sheep).